Here is a 137-residue protein sequence, read N- to C-terminus: 15.7 kDa heat shock protein, peroxisomal (137 aa).

Residues 15–134 (QEWSRSTALI…SSKVRNVNIT (120 aa)) form the sHSP domain. The Microbody targeting signal signature appears at 135-137 (SKL).

Belongs to the small heat shock protein (HSP20) family. May form oligomeric structures.

Its subcellular location is the peroxisome. Its function is as follows. Possesses chaperone activity. The polypeptide is 15.7 kDa heat shock protein, peroxisomal (HSP15.7) (Arabidopsis thaliana (Mouse-ear cress)).